The following is a 325-amino-acid chain: GMP reductase (325 aa).

Cys174 acts as the Thioimidate intermediate in catalysis. 203 to 226 lines the NADP(+) pocket; sequence IIADGGIRTHGDIAKSVRFGATMV.

It belongs to the IMPDH/GMPR family. GuaC type 2 subfamily.

The enzyme catalyses IMP + NH4(+) + NADP(+) = GMP + NADPH + 2 H(+). Functionally, catalyzes the irreversible NADPH-dependent deamination of GMP to IMP. It functions in the conversion of nucleobase, nucleoside and nucleotide derivatives of G to A nucleotides, and in maintaining the intracellular balance of A and G nucleotides. This chain is GMP reductase, found in Enterococcus faecalis (strain ATCC 700802 / V583).